Here is a 1476-residue protein sequence, read N- to C-terminus: Glucosyltransferase-I (1476 aa).

The signal sequence occupies residues 1-34 (MDKKVRYKLRKVKKRWVTVSVASAVMTLTTLSGG). Disordered stretches follow at residues 42-89 (ESKS…ISSS) and 102-141 (PYTVGETASNGEKLQNQTTTVDKTSEAAANNISKQTTEAD). 2 stretches are compositionally biased toward polar residues: residues 43 to 81 (SKSQISNDSNTSVVTANEESNVTTEVTSKQEAASSQTNH) and 102 to 139 (PYTVGETASNGEKLQNQTTTVDKTSEAAANNISKQTTE). Cell wall-binding repeat units lie at residues 159–178 (LPNVKEIDGKYYYYDNNGKV) and 179–199 (RTNFTLIADGKILHFDETGAY). The tract at residues 200 to 1051 (TDTSIDTVNK…NTYFNISDNK (852 aa)) is catalytic; approximate. 11 Cell wall-binding repeats span residues 1087-1106 (KNTFISEGDKWYYFDNNGYM), 1107-1126 (VTGAQSINGVNYYFLSNGLQ), 1170-1189 (SVGLTVIDGQVQYFDEMGYQ), 1214-1234 (RNRFIENEEGKWLYLGEDGAA), 1235-1254 (VTGSQTINGQHLYFRANGVQ), 1279-1299 (RNRFVRNAQGQWFYFDNNGYA), 1300-1319 (VTGARTINGQHLYFRANGVQ), 1344-1364 (RNRFVRNAQGQWFYFDNNGYA), 1365-1384 (VTGARTINGQHLYFRANGVQ), 1409-1429 (RNRFVRNAQGQWFYFDNNGYA), and 1430-1449 (VTGARTINGQHLYFRANGVQ).

Belongs to the glycosyl hydrolase 70 family.

Its subcellular location is the secreted. The catalysed reaction is [(1-&gt;6)-alpha-D-glucosyl](n) + sucrose = [(1-&gt;6)-alpha-D-glucosyl](n+1) + D-fructose. In terms of biological role, production of extracellular glucans, that are thought to play a key role in the development of the dental plaque because of their ability to adhere to smooth surfaces and mediate the aggregation of bacterial cells and food debris. The protein is Glucosyltransferase-I (gtfB) of Streptococcus mutans serotype c (strain ATCC 700610 / UA159).